A 1100-amino-acid chain; its full sequence is Guanylate cyclase 2G (1100 aa).

Residues 1-43 (MASRARSEPPLEHRFYGGAESHAGHSSLVLTLFVVMLMTCLEA) form the signal peptide. The Extracellular segment spans residues 44-481 (AKLTVGFHAP…GAGMTASVTA (438 aa)). Residues N55, N85, N94, N418, and N443 are each glycosylated (N-linked (GlcNAc...) asparagine). Residues 482-502 (VIPTVTLLVVASAAAITGLML) form a helical membrane-spanning segment. Over 503 to 1100 (WRLRGKVQNH…EEEAKVPEIL (598 aa)) the chain is Cytoplasmic. Positions 549-826 (STVKISADCG…PAFPSIKKTL (278 aa)) constitute a Protein kinase domain. A Guanylate cyclase domain is found at 901–1031 (TIFFSDIVGF…DTVNMASRME (131 aa)).

It belongs to the adenylyl cyclase class-4/guanylyl cyclase family. As to quaternary structure, homooligomer. May interact with NPR1/GC-A. N-glycosylated. As to expression, expressed in lung, kidney and skeletal muscle. Low levels in intestine.

It is found in the cell membrane. It localises to the cytoplasm. It catalyses the reaction GTP = 3',5'-cyclic GMP + diphosphate. This chain is Guanylate cyclase 2G (Gucy2g), found in Rattus norvegicus (Rat).